Consider the following 82-residue polypeptide: Myosin light chain alkali (82 aa).

Positions 7–42 (GCYGDFIECLKLYDKEENGTMMLAELQHALLALGES) constitute an EF-hand domain.

Myosin is a hexamer of 2 heavy chains and 4 light chains.

This is Myosin light chain alkali (Mlc1) from Drosophila sechellia (Fruit fly).